A 446-amino-acid chain; its full sequence is Phosphoglucosamine mutase (446 aa).

Catalysis depends on S103, which acts as the Phosphoserine intermediate. Mg(2+) contacts are provided by S103, D242, D244, and D246. S103 is modified (phosphoserine).

Belongs to the phosphohexose mutase family. Mg(2+) is required as a cofactor. Post-translationally, activated by phosphorylation.

The enzyme catalyses alpha-D-glucosamine 1-phosphate = D-glucosamine 6-phosphate. Its function is as follows. Catalyzes the conversion of glucosamine-6-phosphate to glucosamine-1-phosphate. The polypeptide is Phosphoglucosamine mutase (Vibrio atlanticus (strain LGP32) (Vibrio splendidus (strain Mel32))).